Consider the following 190-residue polypeptide: GTP cyclohydrolase 1 (190 aa).

Residues cysteine 78, histidine 81, and cysteine 150 each coordinate Zn(2+).

This sequence belongs to the GTP cyclohydrolase I family. Toroid-shaped homodecamer, composed of two pentamers of five dimers.

The enzyme catalyses GTP + H2O = 7,8-dihydroneopterin 3'-triphosphate + formate + H(+). Its pathway is cofactor biosynthesis; 7,8-dihydroneopterin triphosphate biosynthesis; 7,8-dihydroneopterin triphosphate from GTP: step 1/1. K(+) ions moderately increases the Vmax, whereas UTP and Ca(2+) and Mg(2+) ions drastically increase the Km for GTP. The sequence is that of GTP cyclohydrolase 1 (folE) from Bacillus subtilis (strain 168).